The sequence spans 268 residues: Tryptophan synthase alpha chain (268 aa).

Catalysis depends on proton acceptor residues E49 and D60.

This sequence belongs to the TrpA family. In terms of assembly, tetramer of two alpha and two beta chains.

It carries out the reaction (1S,2R)-1-C-(indol-3-yl)glycerol 3-phosphate + L-serine = D-glyceraldehyde 3-phosphate + L-tryptophan + H2O. The protein operates within amino-acid biosynthesis; L-tryptophan biosynthesis; L-tryptophan from chorismate: step 5/5. Functionally, the alpha subunit is responsible for the aldol cleavage of indoleglycerol phosphate to indole and glyceraldehyde 3-phosphate. The sequence is that of Tryptophan synthase alpha chain from Escherichia coli (strain SE11).